A 235-amino-acid polypeptide reads, in one-letter code: REF/SRPP-like protein At2g47780 (235 aa).

Over residues 1 to 12 the composition is skewed to acidic residues; sequence MAEDEIVVEEEQ. The interval 1–32 is disordered; sequence MAEDEIVVEEEQSQPQEITPVPPSSSSSPSLV.

This sequence belongs to the REF/SRPP family.

The chain is REF/SRPP-like protein At2g47780 from Arabidopsis thaliana (Mouse-ear cress).